Consider the following 405-residue polypeptide: Low-salt glycan biosynthesis sulfotransferase Agl7 (405 aa).

Residues D24, D201, and H202 each coordinate Ca(2+).

It belongs to the sulfatase family. Ca(2+) serves as cofactor.

The protein operates within protein modification; protein glycosylation. It participates in cell surface structure biogenesis; S-layer biogenesis. Involved in N-glycan biosynthetic pathway that takes place under low-salt conditions (1.75 M instead of 3.4 M). Participates in the formation of the tetrasaccharide present at 'Asn-532' of S-layer glycoprotein Csg, consisting of a sulfated hexose, 2 hexoses and rhamnose. Mediates sulfation of sugar 1 in the tetrasaccharide. This Haloferax volcanii (strain ATCC 29605 / DSM 3757 / JCM 8879 / NBRC 14742 / NCIMB 2012 / VKM B-1768 / DS2) (Halobacterium volcanii) protein is Low-salt glycan biosynthesis sulfotransferase Agl7.